A 462-amino-acid polypeptide reads, in one-letter code: Transcript termination protein A18 (462 aa).

In terms of domain architecture, Helicase ATP-binding spans 99–255 (KCKEKRPLYT…NSIINFIKFS (157 aa)). 112–119 (LACGFGKT) is a binding site for ATP. Positions 205–208 (DEAH) match the DEAH box motif. In terms of domain architecture, Helicase C-terminal spans 308-459 (IVDKIIETFK…ATKLGFREVS (152 aa)).

This sequence belongs to the helicase family. Poxviruses subfamily. In terms of assembly, interacts with G2. Might be part of a transcription complex composed at least of G2, A18, and H5.

The protein localises to the virion. Functionally, DNA helicase which seems to act as a postreplicative transcription termination factor. Involved in ATP-dependent release of nascent RNA. Forms a stable complex with single-stranded DNA, and to a lesser extent RNA. The sequence is that of Transcript termination protein A18 from Vertebrata (FPV).